The sequence spans 371 residues: GTPase Obg (371 aa).

The Obg domain maps to 1 to 159 (MKFLDQAKVY…KTIWLRLKLI (159 aa)). The 168-residue stretch at 160-327 (ADAGLVGLPN…VLRALRDIIV (168 aa)) folds into the OBG-type G domain. Residues 166–173 (GLPNAGKS), 191–195 (FTTLH), 212–215 (DIPG), 279–282 (SQID), and 308–310 (SAI) each bind GTP. 2 residues coordinate Mg(2+): serine 173 and threonine 193. The segment at 337–371 (APMKALKVRHRDMQSSGNEGESEDNSDRDDEEQQG) is disordered. Residues 356–371 (GESEDNSDRDDEEQQG) are compositionally biased toward acidic residues.

It belongs to the TRAFAC class OBG-HflX-like GTPase superfamily. OBG GTPase family. Monomer. Mg(2+) is required as a cofactor.

The protein localises to the cytoplasm. Functionally, an essential GTPase which binds GTP, GDP and possibly (p)ppGpp with moderate affinity, with high nucleotide exchange rates and a fairly low GTP hydrolysis rate. Plays a role in control of the cell cycle, stress response, ribosome biogenesis and in those bacteria that undergo differentiation, in morphogenesis control. In Rhizobium rhizogenes (strain K84 / ATCC BAA-868) (Agrobacterium radiobacter), this protein is GTPase Obg.